Here is a 390-residue protein sequence, read N- to C-terminus: Coiled-coil domain-containing protein 85C (390 aa).

Coiled coils occupy residues 26–86 and 116–146; these read KEEL…RELC and KEVG…KEII. The disordered stretch occupies residues 153-237; that stretch reads RNGPGSRSSI…RSIPNGLNDS (85 aa). Polar residues predominate over residues 157-172; that stretch reads GSRSSIDSQNSLTNLN. Residues 182 to 194 show a composition bias toward low complexity; sequence DGSSTSSTGSAGS.

It belongs to the CCDC85 family.

It is found in the cell junction. The protein localises to the tight junction. The protein resides in the adherens junction. Functionally, may play a role in cell-cell adhesion and epithelium development. May play an important role in cortical development, especially in the maintenance of radial glia. This is Coiled-coil domain-containing protein 85C (ccdc85c) from Xenopus laevis (African clawed frog).